A 1345-amino-acid polypeptide reads, in one-letter code: DNA-directed RNA polymerase subunit beta (1345 aa).

Belongs to the RNA polymerase beta chain family. In terms of assembly, the RNAP catalytic core consists of 2 alpha, 1 beta, 1 beta' and 1 omega subunit. When a sigma factor is associated with the core the holoenzyme is formed, which can initiate transcription.

The enzyme catalyses RNA(n) + a ribonucleoside 5'-triphosphate = RNA(n+1) + diphosphate. Its function is as follows. DNA-dependent RNA polymerase catalyzes the transcription of DNA into RNA using the four ribonucleoside triphosphates as substrates. In Shewanella sp. (strain ANA-3), this protein is DNA-directed RNA polymerase subunit beta.